Consider the following 349-residue polypeptide: MEENKKTMEKSVGFTEEQDALVVKSWNAMKKNSGDLSLKFFKKILEIAPPAKQMFSFLKDSNVPLEHNPKLKPHAMSVFLMTCESAVQLRKAGKVTVRESNLKKLGATHFKTGVQDEHFEVTKQALLETIEEAIPEMWYPAMKNAWAEAHDRLANAIKAEMKEAHDQLDSANLIINMEENTGSCFTEEQEALVVKSWNAIKNNSEDLSLKFFKRIFEIAPPAKQLFSFLRDSNVPLEQNPKLKPHAMSVFLMTCESAVQLRKAGKVTVSESNLKKLGATHFKSGVKDEHFEVTKQVLLETIKEALPEMWSPAMENAWGEAHDQLANAIKAEMKKADHDHQANVEDKPSS.

Globin domains are found at residues 13-162 and 184-333; these read GFTE…AEMK and CFTE…AEMK. Positions 56, 70, 74, 104, 108, 109, 227, 241, 245, 275, 279, and 280 each coordinate heme b.

This sequence belongs to the plant globin family. In terms of assembly, monomer. Heme b is required as a cofactor.

The protein resides in the cytoplasm. The protein localises to the nucleus. The enzyme catalyses Fe(III)-heme b-[protein] + nitric oxide + H2O = Fe(II)-heme b-[protein] + nitrite + 2 H(+). Functionally, phytoglobin that regulates the fine tuning of nitric oxide (NO) concentration in the cytosol in response to sudden changes in O(2) availability, and performs both symbiotic and nonsymbiotic functions. Exhibits NO dioxygenase activity in the presence of O(2) but nitrite reductase (NiR) activity in the absence of O(2) (e.g. during flooding or in waterlogged soil). May not function as an oxygen storage or transport protein. Extremely reactive toward the physiological ligands O(2), nitric oxide (NO), and nitrite with a very high affinity for O(2) through an hexacoordinate heme iron because of a very low dissociation constant. The protein is Anaerobic nitrite reductase Glb1-3 of Medicago truncatula (Barrel medic).